Here is an 875-residue protein sequence, read N- to C-terminus: Probable ubiquitin carboxyl-terminal hydrolase 7 (875 aa).

Residues 54–167 form a UBP-type zinc finger; sequence KECSHLKKGV…RDVQQFICSN (114 aa). Zn(2+) contacts are provided by cysteine 56, histidine 58, cysteine 83, cysteine 86, cysteine 101, cysteine 104, cysteine 109, histidine 116, histidine 120, histidine 127, cysteine 140, and cysteine 143. Residues 208–875 form the USP domain; the sequence is PGLKNLGATC…EAYMLFYERV (668 aa). Residue cysteine 217 is the Nucleophile of the active site. Phosphoserine is present on residues serine 333 and serine 337. A disordered region spans residues 396–486; that stretch reads YSKELSQSSD…ASPKKEVLKS (91 aa). The span at 401 to 438 shows a compositional bias: low complexity; sequence SQSSDSSQHQHDSFLPANSSPLAASSTKSLPSSELLDS. Residues 473–484 show a composition bias toward basic and acidic residues; sequence NHEEASPKKEVL. Serine 486 and serine 493 each carry phosphoserine. Basic residues predominate over residues 575-586; that stretch reads RSRFSRSPKKSS. Residues 575–628 form a disordered region; sequence RSRFSRSPKKSSVKIVVDNANDDTDQAPTTNSSSLNENLLGGHASENDKSLKQS. Residues 600–611 are compositionally biased toward polar residues; the sequence is QAPTTNSSSLNE. Serine 645 carries the phosphoserine modification. The active-site Proton acceptor is the histidine 812.

The protein belongs to the peptidase C19 family.

It catalyses the reaction Thiol-dependent hydrolysis of ester, thioester, amide, peptide and isopeptide bonds formed by the C-terminal Gly of ubiquitin (a 76-residue protein attached to proteins as an intracellular targeting signal).. The chain is Probable ubiquitin carboxyl-terminal hydrolase 7 (ubp7) from Schizosaccharomyces pombe (strain 972 / ATCC 24843) (Fission yeast).